The chain runs to 483 residues: Triplex capsid protein 1 (483 aa).

Residues 24-40 carry the RIP homotypic interaction motif (RHIM) motif; it reads LLGNNRFIQIGNGLHMT.

This sequence belongs to the herpesviridae TRX1 protein family. Interacts with TRX2, MCP and capsid vertex component 2/CVC2. Self-assembles into homo-oligomeric amyloid fibrils. Interacts with host ZBP1; this interaction prevents host necroptosis and extrinsic apoptosis. Interacts with host RIPK3.

It is found in the virion. The protein localises to the host nucleus. Its function is as follows. Structural component of the T=16 icosahedral capsid. The capsid is composed of pentamers and hexamers of major capsid protein/MCP, which are linked together by heterotrimers called triplexes. These triplexes are formed by a single molecule of triplex protein 1/TRX1 and two copies of triplex protein 2/TRX2. Additionally, TRX1 is required for efficient transport of TRX2 to the nucleus, which is the site of capsid assembly. Also prevents necroptosis and extrinsic apoptosis by sequestering host ZBP1 into large, insoluble supercomplexes and impairing its ability to interact with RIPK3. This chain is Triplex capsid protein 1, found in Varicella-zoster virus (strain Dumas) (HHV-3).